We begin with the raw amino-acid sequence, 552 residues long: Acyl-CoA synthetase FUM10 (552 aa).

183–194 is a binding site for AMP; that stretch reads ELFTSGTTGAPK. Positions 463–536 are AMP-binding; the sequence is EIEHVARLHD…QEIPYNRTGK (74 aa).

It belongs to the ATP-dependent AMP-binding enzyme family.

It participates in mycotoxin biosynthesis. Its function is as follows. Acyl-CoA synthetase; part of the gene cluster that mediates the biosynthesis of fumonisins B1 (FB1), B2 (FB2), B3 (FB3), and B4 (FB4), which are carcinogenic mycotoxins. Within the pathway, FUM10 is involved the addition of the tricarballylic moieties to the carbon backbone. FUM10 catalyzes the CoA activation of citrate to form tricarballylic acid. The biosynthesis starts with the FUM1-catalyzed carbon chain assembly from one molecule of acetyl-CoA, eight molecules of malonyl-CoA, and two molecules of methionine (in S-adenosyl form). The C18 polyketide chain is released from the enzyme by a nucleophilic attack of a carbanion, which is derived from R-carbon of alanine by decarboxylation, on the carbonyl carbon of polyketide acyl chain. This step is catalyzed by the pyridoxal 5'-phosphate-dependent aminoacyl transferase FUM8. The resultant 3-keto intermediate is then stereospecifically reduced to a 3-hydroxyl product by reductase FUM13. Subsequent oxidations at C-10 by the cytochrome P450 monooxygenase FUM2, C-14 and C-15 by FUM6, FUM12 or FUM15, tricarballylic esterification of the hydroxyl groups on C-14 and C-15 by acyltransferase FUM14, and C-5 hydroxylation by 2-keto-glutarate-dependent dioxygenase FUM3 furnish the biosynthesis of fumonisins. The tricarballylic moieties are most likely derived from the citric acid cycle, and their addition to the carbon backbone may involve FUM7, FUM10, FUM11 and FUM14. This chain is Acyl-CoA synthetase FUM10, found in Gibberella moniliformis (strain M3125 / FGSC 7600) (Maize ear and stalk rot fungus).